The following is a 217-amino-acid chain: 3,4-dihydroxy-2-butanone 4-phosphate synthase (217 aa).

D-ribulose 5-phosphate is bound by residues 37–38 (RE), aspartate 42, 150–154 (RGGHT), and glutamate 174. Glutamate 38 is a binding site for Mg(2+). Mg(2+) is bound at residue histidine 153.

Belongs to the DHBP synthase family. In terms of assembly, homodimer. Mg(2+) is required as a cofactor. Mn(2+) serves as cofactor.

It carries out the reaction D-ribulose 5-phosphate = (2S)-2-hydroxy-3-oxobutyl phosphate + formate + H(+). It participates in cofactor biosynthesis; riboflavin biosynthesis; 2-hydroxy-3-oxobutyl phosphate from D-ribulose 5-phosphate: step 1/1. In terms of biological role, catalyzes the conversion of D-ribulose 5-phosphate to formate and 3,4-dihydroxy-2-butanone 4-phosphate. The protein is 3,4-dihydroxy-2-butanone 4-phosphate synthase of Citrobacter koseri (strain ATCC BAA-895 / CDC 4225-83 / SGSC4696).